Here is a 532-residue protein sequence, read N- to C-terminus: Exopolysaccharide phosphotransferase CpsY (532 aa).

The protein belongs to the stealth family.

The chain is Exopolysaccharide phosphotransferase CpsY (cpsY) from Mycobacterium bovis (strain ATCC BAA-935 / AF2122/97).